The sequence spans 500 residues: Probable 26S proteasome non-ATPase regulatory subunit 3 (500 aa).

A PCI domain is found at 253-432 (ARFLYYLGRI…GYMRTKESTD (180 aa)). The interval 462-484 (RYPPKSYGKELESAEERREREQQ) is disordered. Basic and acidic residues predominate over residues 468–484 (YGKELESAEERREREQQ).

The protein belongs to the proteasome subunit S3 family. In terms of assembly, the 26S proteasome is composed of a core protease, known as the 20S proteasome, capped at one or both ends by the 19S regulatory complex (RC). The RC is composed of at least 18 different subunits in two subcomplexes, the base and the lid, which form the portions proximal and distal to the 20S proteolytic core, respectively.

Its function is as follows. Acts as a regulatory subunit of the 26 proteasome which is involved in the ATP-dependent degradation of ubiquitinated proteins. This chain is Probable 26S proteasome non-ATPase regulatory subunit 3 (DOXA2), found in Anopheles stephensi (Indo-Pakistan malaria mosquito).